The sequence spans 168 residues: Luminal-binding protein 3 (168 aa).

Residue asparagine 120 is glycosylated (N-linked (GlcNAc...) asparagine). Residues 148-168 (QRSGGASGGSSSSEEDGHDEL) form a disordered region. A Prevents secretion from ER motif is present at residues 165-168 (HDEL).

Belongs to the heat shock protein 70 family.

Its subcellular location is the endoplasmic reticulum lumen. Functionally, probably plays a role in facilitating the assembly of multimeric protein complexes inside the ER. The chain is Luminal-binding protein 3 (BIP3) from Nicotiana tabacum (Common tobacco).